Consider the following 609-residue polypeptide: Phosphatidylinositol N-acetylglucosaminyltransferase subunit GPI1 (609 aa).

Topologically, residues 1–186 (MPNYIFWPYE…STCIYKMVAK (186 aa)) are extracellular. A helical transmembrane segment spans residues 187–207 (IGFYLTFVICSIASLVSSLLN). The Cytoplasmic segment spans residues 208–280 (YSHFQLVNYS…FYPDYILLYN (73 aa)). A helical transmembrane segment spans residues 281-301 (TIWLIINDISFGLILGAILIE). The Extracellular portion of the chain corresponds to 302 to 380 (NRDFLVSASH…LSSLLTLTIY (79 aa)). The helical transmembrane segment at 381–401 (MMFLVGFSFAVSLAIDFFAIL) threads the bilayer. The Cytoplasmic segment spans residues 402–451 (SFPIYVFYRISSKLYHCQLNIMASLFNLFCGKKRNVLRNRIDHNYFQLDQ). Residues 452–472 (LLLGTLLFIILVFLTPTVMAF) traverse the membrane as a helical segment. Residues 473 to 485 (YMSYTVLRMLTIT) are Extracellular-facing. Residues 486–506 (IEIFSEAVIALINHFPLFALL) form a helical membrane-spanning segment. The Cytoplasmic segment spans residues 507-609 (LRLKDPKRLP…DLYKRLTIQA (103 aa)).

It belongs to the PIGQ family. As to quaternary structure, component of the phosphatidylinositol N-acetylglucosaminyltransferase (GPI-GlcNAc transferase) complex composed of at least GPI1, GPI2, GPI3, GPI15, GPI19 and ERI1.

The protein resides in the membrane. It catalyses the reaction a 1,2-diacyl-sn-glycero-3-phospho-(1D-myo-inositol) + UDP-N-acetyl-alpha-D-glucosamine = a 6-(N-acetyl-alpha-D-glucosaminyl)-1-(1,2-diacyl-sn-glycero-3-phospho)-1D-myo-inositol + UDP + H(+). It participates in glycolipid biosynthesis; glycosylphosphatidylinositol-anchor biosynthesis. Part of the complex catalyzing the transfer of N-acetylglucosamine from UDP-N-acetylglucosamine to phosphatidylinositol, the first step of GPI biosynthesis. The protein is Phosphatidylinositol N-acetylglucosaminyltransferase subunit GPI1 (GPI1) of Saccharomyces cerevisiae (strain ATCC 204508 / S288c) (Baker's yeast).